Here is a 329-residue protein sequence, read N- to C-terminus: Phosphate import ATP-binding protein PstB (329 aa).

The region spanning phenylalanine 83 to isoleucine 325 is the ABC transporter domain. Glycine 116 to serine 123 lines the ATP pocket.

The protein belongs to the ABC transporter superfamily. Phosphate importer (TC 3.A.1.7) family. In terms of assembly, the complex is composed of two ATP-binding proteins (PstB), two transmembrane proteins (PstC and PstA) and a solute-binding protein (PstS).

Its subcellular location is the cell membrane. It catalyses the reaction phosphate(out) + ATP + H2O = ADP + 2 phosphate(in) + H(+). In terms of biological role, part of the ABC transporter complex PstSACB involved in phosphate import. Responsible for energy coupling to the transport system. The sequence is that of Phosphate import ATP-binding protein PstB from Mycoplasma genitalium (strain ATCC 33530 / DSM 19775 / NCTC 10195 / G37) (Mycoplasmoides genitalium).